The sequence spans 657 residues: UvrABC system protein B (657 aa).

Positions 29–416 constitute a Helicase ATP-binding domain; the sequence is KLAEFQTNEQ…LSHNNVVEQL (388 aa). 42–49 serves as a coordination point for ATP; it reads GATGTGKT. The Beta-hairpin motif lies at 95 to 118; the sequence is YFDFYQPEAYLPAKGVYIEKSATV. In terms of domain architecture, Helicase C-terminal spans 435 to 597; the sequence is QVEDLVSEII…KTPMTVQKPI (163 aa). Positions 615–650 constitute a UVR domain; sequence AALIKQLTKEMKQAAANQNYELAIEIRDSIFELEKQ.

This sequence belongs to the UvrB family. In terms of assembly, forms a heterotetramer with UvrA during the search for lesions. Interacts with UvrC in an incision complex.

Its subcellular location is the cytoplasm. Functionally, the UvrABC repair system catalyzes the recognition and processing of DNA lesions. A damage recognition complex composed of 2 UvrA and 2 UvrB subunits scans DNA for abnormalities. Upon binding of the UvrA(2)B(2) complex to a putative damaged site, the DNA wraps around one UvrB monomer. DNA wrap is dependent on ATP binding by UvrB and probably causes local melting of the DNA helix, facilitating insertion of UvrB beta-hairpin between the DNA strands. Then UvrB probes one DNA strand for the presence of a lesion. If a lesion is found the UvrA subunits dissociate and the UvrB-DNA preincision complex is formed. This complex is subsequently bound by UvrC and the second UvrB is released. If no lesion is found, the DNA wraps around the other UvrB subunit that will check the other stand for damage. This chain is UvrABC system protein B, found in Mycoplasma pneumoniae (strain ATCC 29342 / M129 / Subtype 1) (Mycoplasmoides pneumoniae).